The primary structure comprises 389 residues: Chalcone synthase 3 (389 aa).

Cysteine 164 is an active-site residue.

Belongs to the thiolase-like superfamily. Chalcone/stilbene synthases family.

The catalysed reaction is (E)-4-coumaroyl-CoA + 3 malonyl-CoA + 3 H(+) = 2',4,4',6'-tetrahydroxychalcone + 3 CO2 + 4 CoA. It functions in the pathway secondary metabolite biosynthesis; flavonoid biosynthesis. Functionally, the primary product of this enzyme is 4,2',4',6'-tetrahydroxychalcone (also termed naringenin-chalcone or chalcone) which can under specific conditions spontaneously isomerize into naringenin. In Trifolium subterraneum (Subterranean clover), this protein is Chalcone synthase 3 (CHS3).